We begin with the raw amino-acid sequence, 109 residues long: MATIATYLLAAVAEIGGCFAFWAWLRLDRSPLWLIPGMASLALFAWALTRIDSDLAGRAYAAYGGIYILTSLVWMWLVEGSRPDRWDTLGTVLCVSGALVIIFGPRGGQ.

Helical transmembrane passes span 4 to 24, 31 to 51, 59 to 79, and 88 to 108; these read IATY…FWAW, PLWL…LTRI, AYAA…WLVE, and TLGT…PRGG.

Belongs to the UPF0060 family.

It is found in the cell inner membrane. The sequence is that of UPF0060 membrane protein RC1_3291 from Rhodospirillum centenum (strain ATCC 51521 / SW).